Reading from the N-terminus, the 295-residue chain is Protoheme IX farnesyltransferase (295 aa).

Helical transmembrane passes span 9–29 (ITKPGIIFGNVLSVAGGFFLA), 36–56 (FGVFLAAVIGTSLVVASGCVF), 80–100 (LVSLKLALLYATLLGIAGVGL), 108–128 (LAALFAVIGFVIYVGLYSLYL), 135–155 (GTLVGSLSGAMPPVIGYCAVS), 163–183 (LTLLVMFSLWQMPHSYAIAIF), 209–229 (IMLYILAFLVATLMLTVGGYA), 230–250 (GLNYLAVAAGMGMYWLYMAWK), and 265–285 (FVFSIFTITALSVMMSVDFQV).

Belongs to the UbiA prenyltransferase family. Protoheme IX farnesyltransferase subfamily.

Its subcellular location is the cell inner membrane. It catalyses the reaction heme b + (2E,6E)-farnesyl diphosphate + H2O = Fe(II)-heme o + diphosphate. It participates in porphyrin-containing compound metabolism; heme O biosynthesis; heme O from protoheme: step 1/1. Its function is as follows. Converts heme B (protoheme IX) to heme O by substitution of the vinyl group on carbon 2 of heme B porphyrin ring with a hydroxyethyl farnesyl side group. The polypeptide is Protoheme IX farnesyltransferase (Pseudomonas syringae pv. syringae (strain B728a)).